Consider the following 193-residue polypeptide: Orotate phosphoribosyltransferase (193 aa).

5-phospho-alpha-D-ribose 1-diphosphate contacts are provided by residues R85, K89, H91, and 111-119; that span reads DDVLTTGKS. Positions 115 and 143 each coordinate orotate.

This sequence belongs to the purine/pyrimidine phosphoribosyltransferase family. PyrE subfamily. In terms of assembly, homodimer. Mg(2+) serves as cofactor.

The catalysed reaction is orotidine 5'-phosphate + diphosphate = orotate + 5-phospho-alpha-D-ribose 1-diphosphate. The protein operates within pyrimidine metabolism; UMP biosynthesis via de novo pathway; UMP from orotate: step 1/2. In terms of biological role, catalyzes the transfer of a ribosyl phosphate group from 5-phosphoribose 1-diphosphate to orotate, leading to the formation of orotidine monophosphate (OMP). The protein is Orotate phosphoribosyltransferase of Pyrobaculum islandicum (strain DSM 4184 / JCM 9189 / GEO3).